The following is a 196-amino-acid chain: Xanthine phosphoribosyltransferase (196 aa).

Xanthine-binding residues include Leu-20 and Asn-27. 128-132 (ATGAA) contributes to the 5-phospho-alpha-D-ribose 1-diphosphate binding site. Lys-156 contributes to the xanthine binding site.

It belongs to the purine/pyrimidine phosphoribosyltransferase family. Xpt subfamily. Homodimer.

It localises to the cytoplasm. The catalysed reaction is XMP + diphosphate = xanthine + 5-phospho-alpha-D-ribose 1-diphosphate. It participates in purine metabolism; XMP biosynthesis via salvage pathway; XMP from xanthine: step 1/1. Functionally, converts the preformed base xanthine, a product of nucleic acid breakdown, to xanthosine 5'-monophosphate (XMP), so it can be reused for RNA or DNA synthesis. The sequence is that of Xanthine phosphoribosyltransferase from Brevibacillus brevis (strain 47 / JCM 6285 / NBRC 100599).